The following is a 150-amino-acid chain: Large ribosomal subunit protein uL13 (150 aa).

This sequence belongs to the universal ribosomal protein uL13 family. Part of the 50S ribosomal subunit.

In terms of biological role, this protein is one of the early assembly proteins of the 50S ribosomal subunit, although it is not seen to bind rRNA by itself. It is important during the early stages of 50S assembly. This Sulfurihydrogenibium sp. (strain YO3AOP1) protein is Large ribosomal subunit protein uL13.